We begin with the raw amino-acid sequence, 142 residues long: Large ribosomal subunit protein uL11 (142 aa).

It belongs to the universal ribosomal protein uL11 family. Part of the ribosomal stalk of the 50S ribosomal subunit. Interacts with L10 and the large rRNA to form the base of the stalk. L10 forms an elongated spine to which L12 dimers bind in a sequential fashion forming a multimeric L10(L12)X complex. One or more lysine residues are methylated.

In terms of biological role, forms part of the ribosomal stalk which helps the ribosome interact with GTP-bound translation factors. The chain is Large ribosomal subunit protein uL11 from Actinobacillus succinogenes (strain ATCC 55618 / DSM 22257 / CCUG 43843 / 130Z).